Consider the following 62-residue polypeptide: Prokaryotic ubiquitin-like protein Pup 2 (62 aa).

The segment at 1–34 (MRQEKPKRHGREDDEPPEPAPAGRARDTTVGDDT) is disordered. Residues 21–56 (PAGRARDTTVGDDTDELLDEIDGVLEENAVEFVRSY) form an ARC ATPase binding region. An Isoglutamyl lysine isopeptide (Glu-Lys) (interchain with K-? in acceptor proteins) cross-link involves residue glutamate 62.

It belongs to the prokaryotic ubiquitin-like protein family. In terms of assembly, strongly interacts with the proteasome-associated ATPase ARC through a hydrophobic interface; the interacting region of Pup lies in its C-terminal half. There is one Pup binding site per ARC hexamer ring.

Its pathway is protein degradation; proteasomal Pup-dependent pathway. Protein modifier that is covalently attached to lysine residues of substrate proteins, thereby targeting them for proteasomal degradation. The tagging system is termed pupylation. The protein is Prokaryotic ubiquitin-like protein Pup 2 of Saccharopolyspora erythraea (strain ATCC 11635 / DSM 40517 / JCM 4748 / NBRC 13426 / NCIMB 8594 / NRRL 2338).